The primary structure comprises 128 residues: Large ribosomal subunit protein bL17 (128 aa).

This sequence belongs to the bacterial ribosomal protein bL17 family. As to quaternary structure, part of the 50S ribosomal subunit. Contacts protein L32.

The polypeptide is Large ribosomal subunit protein bL17 (Pseudomonas fluorescens (strain Pf0-1)).